The following is a 314-amino-acid chain: MLQSLNRSVRYLSTSIGSRLYCSNTNQTTKNNTNASGVNDNQQTHFGFKTVNKEDKESMVKDVFDSVSSSYDLMNDVMSMGIHRLWKDELINTLNPTPGSHLLDVAGGTGDISFRFLDKIKTSPNYFPNINKSNNGGGEVLKSSSLPSSATVFDINQSMLNEGKKRGLNKGYTDQSDPSIDWVQGNSEQLPFKDNTFNCYTVSFGIRNCTNIDQVLREAYRVLKPGGRFLCLEFSQVPNPLLRFAYDQYSFNVIPIMGQLISGDRDSYSYLVESIRKFPDQETFVQMIQDAGFKQVTYKNLTFGICSIHSGFKL.

Residues 1–19 (MLQSLNRSVRYLSTSIGSR) constitute a mitochondrion transit peptide. S-adenosyl-L-methionine-binding positions include Thr-109, Asp-154, 186 to 187 (NS), and Ser-203.

The protein belongs to the class I-like SAM-binding methyltransferase superfamily. MenG/UbiE family. Component of a multi-subunit COQ enzyme complex.

It localises to the mitochondrion inner membrane. It catalyses the reaction a 2-methoxy-6-(all-trans-polyprenyl)benzene-1,4-diol + S-adenosyl-L-methionine = a 5-methoxy-2-methyl-3-(all-trans-polyprenyl)benzene-1,4-diol + S-adenosyl-L-homocysteine + H(+). It functions in the pathway cofactor biosynthesis; ubiquinone biosynthesis. Its function is as follows. Methyltransferase required for the conversion of 2-polyprenyl-6-methoxy-1,4-benzoquinol (DDMQH2) to 2-polyprenyl-3-methyl-6-methoxy-1,4-benzoquinol (DMQH2). This Dictyostelium discoideum (Social amoeba) protein is 2-methoxy-6-polyprenyl-1,4-benzoquinol methylase, mitochondrial.